The chain runs to 615 residues: Aspartokinase (615 aa).

Disordered stretches follow at residues 84 to 105 and 127 to 171; these read ALQP…GTAT and SSVS…SISQ. Low complexity-rich tracts occupy residues 90-102 and 127-164; these read SSSG…SMSG and SSVS…ATPS. The 71-residue stretch at 467-537 folds into the ACT domain; that stretch reads IHSNRKTLSH…EVTVSKDMAI (71 aa).

It belongs to the aspartokinase family.

The catalysed reaction is L-aspartate + ATP = 4-phospho-L-aspartate + ADP. It functions in the pathway amino-acid biosynthesis; L-methionine biosynthesis via de novo pathway; L-homoserine from L-aspartate: step 1/3. Its pathway is amino-acid biosynthesis; L-threonine biosynthesis; L-threonine from L-aspartate: step 1/5. Functionally, phosphorylates aspartate, the first step in the biosynthesis of amino acids that derive from aspartate (the aspartate family of amino acids), including methioinine and threonine, the latter of which is a precursor to isoleucine. The polypeptide is Aspartokinase (Cryptococcus neoformans var. grubii serotype A (strain H99 / ATCC 208821 / CBS 10515 / FGSC 9487) (Filobasidiella neoformans var. grubii)).